Reading from the N-terminus, the 463-residue chain is FAD-dependent monooxygenase ausM (463 aa).

Residues Glu40, Gly54, and Arg113 each coordinate FAD. Tyr217 is a catalytic residue. Asp309 and Ala322 together coordinate FAD. The chain crosses the membrane as a helical span at residues 443–463; that stretch reads VPWLVISLPVLASVLCYLMFA.

Belongs to the paxM FAD-dependent monooxygenase family. The cofactor is FAD.

It localises to the membrane. It functions in the pathway secondary metabolite biosynthesis; terpenoid biosynthesis. In terms of biological role, FAD-dependent monooxygenase; part of the gene cluster that mediates the biosynthesis of calidodehydroaustin, a fungal meroterpenoid. The first step of the pathway is the synthesis of 3,5-dimethylorsellinic acid by the polyketide synthase ausA. 3,5-dimethylorsellinic acid is then prenylated by the polyprenyl transferase ausN. Further epoxidation by the FAD-dependent monooxygenase ausM and cyclization by the probable terpene cyclase ausL lead to the formation of protoaustinoid A. Protoaustinoid A is then oxidized to spiro-lactone preaustinoid A3 by the combined action of the FAD-binding monooxygenases ausB and ausC, and the dioxygenase ausE. Acid-catalyzed keto-rearrangement and ring contraction of the tetraketide portion of preaustinoid A3 by ausJ lead to the formation of preaustinoid A4. The aldo-keto reductase ausK, with the help of ausH, is involved in the next step by transforming preaustinoid A4 into isoaustinone which is in turn hydroxylated by the P450 monooxygenase ausI to form austinolide. The cytochrome P450 monooxygenase ausG modifies austinolide to austinol. Austinol is further acetylated to austin by the O-acetyltransferase ausP, which spontaneously changes to dehydroaustin. The cytochrome P450 monooxygenase ausR then converts dehydroaustin is into 7-dehydrodehydroaustin. The hydroxylation catalyzed by ausR permits the O-acetyltransferase ausQ to add an additional acetyl group to the molecule, leading to the formation of acetoxydehydroaustin. The short chain dehydrogenase ausT catalyzes the reduction of the double bond present between carbon atoms 1 and 2 to convert 7-dehydrodehydroaustin into 1,2-dihydro-7-hydroxydehydroaustin. AusQ catalyzes not only an acetylation reaction but also the addition of the PKS ausV diketide product to 1,2-dihydro-7-hydroxydehydroaustin, forming precalidodehydroaustin. Finally, the iron/alpha-ketoglutarate-dependent dioxygenase converts precalidodehydroaustin into calidodehydroaustin. This Aspergillus calidoustus protein is FAD-dependent monooxygenase ausM.